The sequence spans 265 residues: Phosphate import ATP-binding protein PstB (265 aa).

One can recognise an ABC transporter domain in the interval 11–260 (VSADEVKIAA…PRDPRTESYI (250 aa)). Position 50-57 (50-57 (GPSGCGKS)) interacts with ATP.

It belongs to the ABC transporter superfamily. Phosphate importer (TC 3.A.1.7) family. In terms of assembly, the complex is composed of two ATP-binding proteins (PstB), two transmembrane proteins (PstC and PstA) and a solute-binding protein (PstS).

The protein resides in the cell inner membrane. It carries out the reaction phosphate(out) + ATP + H2O = ADP + 2 phosphate(in) + H(+). In terms of biological role, part of the ABC transporter complex PstSACB involved in phosphate import. Responsible for energy coupling to the transport system. The sequence is that of Phosphate import ATP-binding protein PstB from Cereibacter sphaeroides (strain ATCC 17023 / DSM 158 / JCM 6121 / CCUG 31486 / LMG 2827 / NBRC 12203 / NCIMB 8253 / ATH 2.4.1.) (Rhodobacter sphaeroides).